A 313-amino-acid polypeptide reads, in one-letter code: Ribosomal RNA small subunit methyltransferase H (313 aa).

Residues 33–35 (GGH), Asp-53, Phe-80, Asp-101, and Gln-108 contribute to the S-adenosyl-L-methionine site. The interval 282 to 313 (LVHNKPLTPSEAEIEQNPRARSAKLRVAQKLA) is disordered.

Belongs to the methyltransferase superfamily. RsmH family.

Its subcellular location is the cytoplasm. It carries out the reaction cytidine(1402) in 16S rRNA + S-adenosyl-L-methionine = N(4)-methylcytidine(1402) in 16S rRNA + S-adenosyl-L-homocysteine + H(+). Functionally, specifically methylates the N4 position of cytidine in position 1402 (C1402) of 16S rRNA. The sequence is that of Ribosomal RNA small subunit methyltransferase H from Magnetococcus marinus (strain ATCC BAA-1437 / JCM 17883 / MC-1).